The primary structure comprises 347 residues: SUMO-activating enzyme subunit 1 (347 aa).

The protein belongs to the ubiquitin-activating E1 family. As to quaternary structure, heterodimer of sae1 and uba2/sae2. The heterodimer corresponds to the two domains that are encoded on a single polypeptide chain in ubiquitin-activating enzyme E1. Interacts with ube2i.

The protein localises to the nucleus. Its pathway is protein modification; protein sumoylation. The heterodimer acts as an E1 ligase for sumo1, sumo2, and sumo3. It mediates ATP-dependent activation of sumo proteins followed by formation of a thioester bond between a sumo protein and a conserved active site cysteine residue on uba2/sae2. In Xenopus tropicalis (Western clawed frog), this protein is SUMO-activating enzyme subunit 1 (sae1).